The primary structure comprises 269 residues: Zinc transporter ZupT (269 aa).

Transmembrane regions (helical) follow at residues 5–25 (VLLA…GSLI), 38–58 (SLAL…EIFV), 75–95 (WMTI…DKFI), 125–145 (MGIF…IATF), 158–178 (IAIA…VPIF), 190–210 (LSFL…LLLM), 212–232 (FLTD…MVFI), and 249–269 (LSMY…VLLV). Positions 137 and 140 each coordinate Fe(2+). 2 residues coordinate Zn(2+): Glu-140 and His-165. Positions 166, 169, and 198 each coordinate Fe(2+). Glu-169 is a Zn(2+) binding site.

Belongs to the ZIP transporter (TC 2.A.5) family. ZupT subfamily.

The protein localises to the cell membrane. It carries out the reaction Zn(2+)(in) = Zn(2+)(out). In terms of biological role, mediates zinc uptake. May also transport other divalent cations. In Lysinibacillus sphaericus (strain C3-41), this protein is Zinc transporter ZupT.